Reading from the N-terminus, the 1488-residue chain is Phenolphthiocerol/phthiocerol polyketide synthase subunit E (1488 aa).

The 434-residue stretch at 5 to 438 (ENAIAVVGMA…GTNAHVVLEE (434 aa)) folds into the Ketosynthase family 3 (KS3) domain. Residues Cys-184, His-320, and His-361 each act as for beta-ketoacyl synthase activity in the active site. The tract at residues 551 to 868 (VFLFPGQGAQ…GELWSAGVEV (318 aa)) is acyltransferase. Residue Ser-641 is the For malonyltransferase activity of the active site. A Carrier domain is found at 930 to 1004 (NGESQTEVTL…SLTAAVDASF (75 aa)). Ser-965 carries the post-translational modification O-(pantetheine 4'-phosphoryl)serine. NADP(+) is bound at residue 1286 to 1331 (EGVVAVELEGEGRSVLRPDVDLRRTVGWFTTYYPVPLACATGLGAL).

NADP(+) is required as a cofactor. The cofactor is pantetheine 4'-phosphate.

It carries out the reaction icosanoyl-[(phenol)carboxyphthiodiolenone synthase] + 2 (S)-methylmalonyl-CoA + 3 malonyl-CoA + 5 NADPH + 10 H(+) = C32-carboxyphthiodiolenone-[(phenol)carboxyphthiodiolenone synthase] + 5 CO2 + 5 NADP(+) + 5 CoA + 2 H2O. It catalyses the reaction docosanoyl-[(phenol)carboxyphthiodiolenone synthase] + 2 (S)-methylmalonyl-CoA + 3 malonyl-CoA + 5 NADPH + 10 H(+) = C34-carboxyphthiodiolenone-[(phenol)carboxyphthiodiolenone synthase] + 5 CO2 + 5 NADP(+) + 5 CoA + 2 H2O. The catalysed reaction is 17-(4-hydroxyphenyl)heptadecanoyl-[(phenol)carboxyphthiodiolenone synthase] + 2 (S)-methylmalonyl-CoA + 3 malonyl-CoA + 5 NADPH + 10 H(+) = C35-(phenol)carboxyphthiodiolenone-[(phenol)carboxyphthiodiolenone synthase] + 5 CO2 + 5 NADP(+) + 5 CoA + 2 H2O. The enzyme catalyses 19-(4-hydroxyphenyl)nonadecanoyl-[(phenol)carboxyphthiodiolenone synthase] + 2 (S)-methylmalonyl-CoA + 3 malonyl-CoA + 5 NADPH + 10 H(+) = C37-(phenol)carboxyphthiodiolenone-[(phenol)carboxyphthiodiolenone synthase] + 5 CO2 + 5 NADP(+) + 5 CoA + 2 H2O. Its pathway is lipid metabolism; fatty acid biosynthesis. In terms of biological role, part of the PpsABCDE complex involved in the biosynthesis of the lipid core common to phthiocerols and phenolphthiocerols by successive additions of malonyl-CoA or methylmalonyl-CoA extender units. PpsA can accept as substrate the activated forms of either icosanoyl (C20), docosanoyl (C22) or lignoceroyl (C24) groups from FadD26, or a (4-hydroxyphenyl)-C17 or (4-hydroxyphenyl)-C19 fatty acyl from FadD29. PpsA initiates the biosynthesis and extends its substrate using a malonyl-CoA extender unit. The PpsB and PpsC proteins add the second and third malonyl-CoA extender units. PpsD adds an (R)-methylmalonyl unit and PpsE adds a second (R)-methylmalonyl unit. The incorporation of the methylmalonyl units results in formation of two branched methyl groups in the elongated product. This is Phenolphthiocerol/phthiocerol polyketide synthase subunit E (ppsE) from Mycobacterium bovis (strain ATCC BAA-935 / AF2122/97).